The sequence spans 328 residues: DNA-directed RNA polymerase subunit alpha (328 aa).

The interval 1–234 (MVREKVKVST…DLFIPFLQAE (234 aa)) is alpha N-terminal domain (alpha-NTD). The alpha C-terminal domain (alpha-CTD) stretch occupies residues 268–328 (IALKSIFIDQ…KQIMSILEKK (61 aa)).

It belongs to the RNA polymerase alpha chain family. As to quaternary structure, in plastids the minimal PEP RNA polymerase catalytic core is composed of four subunits: alpha, beta, beta', and beta''. When a (nuclear-encoded) sigma factor is associated with the core the holoenzyme is formed, which can initiate transcription.

The protein localises to the plastid. Its subcellular location is the chloroplast. It catalyses the reaction RNA(n) + a ribonucleoside 5'-triphosphate = RNA(n+1) + diphosphate. In terms of biological role, DNA-dependent RNA polymerase catalyzes the transcription of DNA into RNA using the four ribonucleoside triphosphates as substrates. This is DNA-directed RNA polymerase subunit alpha from Citrus sinensis (Sweet orange).